The chain runs to 217 residues: Large ribosomal subunit protein bL25 (217 aa).

The interval 187-217 is disordered; sequence STPSGLEVEEETGEEESAEPEVIEKGKKEEE. A compositionally biased stretch (acidic residues) spans 193 to 207; the sequence is EVEEETGEEESAEPE. Residues 208–217 are compositionally biased toward basic and acidic residues; it reads VIEKGKKEEE.

This sequence belongs to the bacterial ribosomal protein bL25 family. CTC subfamily. Part of the 50S ribosomal subunit; part of the 5S rRNA/L5/L18/L25 subcomplex. Contacts the 5S rRNA. Binds to the 5S rRNA independently of L5 and L18.

Its function is as follows. This is one of the proteins that binds to the 5S RNA in the ribosome where it forms part of the central protuberance. The sequence is that of Large ribosomal subunit protein bL25 from Thermosipho africanus (strain TCF52B).